Reading from the N-terminus, the 120-residue chain is MVEDIIIVSTPYVPGYKITKTYGFTWGLIVRSRGIGGNIIASLRTIFGGEIHEYTELLNQSRQYALDRMKQHAREMGANAVVSVGFDSSDIGQNMSEVLAFGTAVTVEPETAASSPVRLG.

Belongs to the UPF0145 family.

In Methanocella arvoryzae (strain DSM 22066 / NBRC 105507 / MRE50), this protein is UPF0145 protein UNCMA_30400.